A 521-amino-acid chain; its full sequence is Probable xyloglucan galactosyltransferase GT14 (521 aa).

The Cytoplasmic portion of the chain corresponds to 1 to 30; that stretch reads MRPKNYSQMEKPISITTGKFRTNNNNNHNN. A helical; Signal-anchor for type II membrane protein membrane pass occupies residues 31–51; sequence VWFVVPLFFILCFVLLCFDYS. Residues 52 to 521 are Lumenal-facing; sequence ALFTDTDETA…SPYEEPQVLA (470 aa). Residues 72–92 form a disordered region; sequence TSSEFTKDDNFSRFPDDPSPD. Basic and acidic residues predominate over residues 76-87; sequence FTKDDNFSRFPD. 6 N-linked (GlcNAc...) asparagine glycosylation sites follow: asparagine 81, asparagine 177, asparagine 203, asparagine 249, asparagine 265, and asparagine 411. Positions 492 to 521 are disordered; the sequence is RQGKDGSDGFDDRDDYKYTFSPYEEPQVLA.

Belongs to the glycosyltransferase 47 family. As to expression, expressed in roots, hypocotyls, cotyledons, leaves, stems, stamens and carpels.

Its subcellular location is the golgi apparatus membrane. Functions in xyloglucan synthesis by adding side chains to the xylosylated glucan backbone. Involved in the galactosylation of hemicellulose xyloglucan. In Arabidopsis thaliana (Mouse-ear cress), this protein is Probable xyloglucan galactosyltransferase GT14.